Here is a 78-residue protein sequence, read N- to C-terminus: Small ribosomal subunit protein bS18 (78 aa).

Belongs to the bacterial ribosomal protein bS18 family. As to quaternary structure, part of the 30S ribosomal subunit. Forms a tight heterodimer with protein bS6.

Functionally, binds as a heterodimer with protein bS6 to the central domain of the 16S rRNA, where it helps stabilize the platform of the 30S subunit. This is Small ribosomal subunit protein bS18 from Parafrankia sp. (strain EAN1pec).